A 182-amino-acid chain; its full sequence is Vacuolar protein sorting-associated protein 29 (182 aa).

At Lys-50 the chain carries N6-acetyllysine.

This sequence belongs to the VPS29 family. In terms of assembly, component of the commander complex consisting of the CCC subcomplex and the retriever subcomplex. Component of the heterotrimeric retriever complex formed by VPS26C, VPS29 and VPS35L; within the complex interacts with VPS35L. Component of the heterotrimeric retromer cargo-selective complex (CSC), also described as vacuolar protein sorting subcomplex (VPS) formed by VPS26 (VPS26A or VPS26B), VPS29 and VPS35. The CSC has a highly elongated structure with VPS26 and VPS29 binding independently at opposite distal ends of VPS35 as central platform. The CSC is believed to associate with variable sorting nexins to form functionally distinct retromer complex variants. The originally described retromer complex (also called SNX-BAR retromer) is a pentamer containing the CSC and a heterodimeric membrane-deforming subcomplex formed between SNX1 or SNX2 and SNX5 or SNX6 (also called SNX-BAR subcomplex); the respective CSC and SNX-BAR subcomplexes associate with low affinity. The CSC associates with SNX3 to form a SNX3-retromer complex. The CSC associates with SNX27, the WASH complex and the SNX-BAR subcomplex to form the SNX27-retromer complex. Interacts with VPS26A, VPS35, SNX1, SNX2, SNX3, SNX27, WASHC5. Interacts with TBC1D5; this interaction is blocked by VPS35L in the retriever complex. Interacts with SNX17; the interaction is indirect; SNX17 (via its C-terminus) interacts with the retriever complex (via VPS26C and VPS35L). Interacts with VPS26B and ANKRD27.

It localises to the cytoplasm. Its subcellular location is the membrane. The protein resides in the endosome membrane. In terms of biological role, component of the commander complex that is essential for endosomal recycling of transmembrane cargos; the commander complex is composed of the CCC subcomplex and the retriever subcomplex. Component of the retriever complex, which is a heterotrimeric complex related to retromer cargo-selective complex (CSC) and essential for retromer-independent retrieval and recycling of numerous cargos such as integrin alpha-5/beta-1 (ITGA5:ITGB1). Component of the retromer cargo-selective complex (CSC). The CSC is believed to be the core functional component of retromer or respective retromer complex variants acting to prevent missorting of selected transmembrane cargo proteins into the lysosomal degradation pathway. The recruitment of the CSC to the endosomal membrane involves RAB7A and SNX3. The SNX-BAR retromer mediates retrograde transport of cargo proteins from endosomes to the trans-Golgi network (TGN) and is involved in endosome-to-plasma membrane transport for cargo protein recycling. The SNX3-retromer mediates the retrograde endosome-to-TGN transport of WLS distinct from the SNX-BAR retromer pathway. The SNX27-retromer is believed to be involved in endosome-to-plasma membrane trafficking and recycling of a broad spectrum of cargo proteins. The CSC seems to act as recruitment hub for other proteins, such as the WASH complex and TBC1D5. Required to regulate transcytosis of the polymeric immunoglobulin receptor (pIgR-pIgA). In the endosomes, retriever complex drives the retrieval and recycling of NxxY-motif-containing cargo proteins by coupling to SNX17, a cargo essential for the homeostatic maintenance of numerous cell surface proteins associated with processes that include cell migration, cell adhesion, nutrient supply and cell signaling. The recruitment of the retriever complex to the endosomal membrane involves CCC and WASH complexes. Involved in GLUT1 endosome-to-plasma membrane trafficking; the function is dependent of association with ANKRD27. The chain is Vacuolar protein sorting-associated protein 29 (Vps29) from Mus musculus (Mouse).